Consider the following 413-residue polypeptide: Monacolin J acid methylbutanoyltransferase (413 aa).

R73 contributes to the monacolin J binding site. S76 acts as the Acyl-ester intermediate in catalysis. Residues R173, Y188, and Y258 each coordinate monacolin J. G366 lines the 2-methylbutanoate pocket. E388 and W390 together coordinate monacolin J.

This sequence belongs to the class-A beta-lactamase family. In terms of assembly, interacts with LovF.

The catalysed reaction is monacolin J carboxylate + (S)-2-methylbutanoyl-[2-methylbutanoate polyketide synthase] = lovastatin carboxylate + holo-[2-methylbutanoate polyketide synthase]. It functions in the pathway polyketide biosynthesis; lovastatin biosynthesis. Its function is as follows. Monacolin J acid methylbutanoyltransferase; part of the gene cluster that mediates the biosynthesis of lovastatin (also known as mevinolin, mevacor or monacolin K), a hypolipidemic inhibitor of (3S)-hydroxymethylglutaryl-coenzyme A (HMG-CoA) reductase (HMGR). The first step in the biosynthesis of lovastatin is the production of dihydromonacolin L acid by the lovastatin nonaketide synthase lovB and the trans-acting enoyl reductase lovC via condensation of one acetyl-CoA unit and 8 malonyl-CoA units. Dihydromonacolin L acid is released from lovB by the thioesterase lovG. Next, dihydromonacolin L acid is oxidized by the dihydromonacolin L monooxygenase lovA twice to form monacolin J acid. The 2-methylbutyrate moiety of lovastatin is synthesized by the lovastatin diketide synthase lovF via condensation of one acetyl-CoA unit and one malonyl-CoA unit. Finally, the covalent attachment of this moiety to monacolin J acid is catalyzed by the transesterase lovD to yield lovastatin. LovD has broad substrate specificity and can also convert monacolin J to simvastatin using alpha-dimethylbutanoyl-S-methyl-3-mercaptopropionate (DMB-S-MMP) as the thioester acyl donor, and can also catalyze the reverse reaction and function as hydrolase in vitro. LovD has much higher activity with LovF-bound 2-methylbutanoate than with free diketide substrates. The sequence is that of Monacolin J acid methylbutanoyltransferase from Aspergillus terreus.